A 481-amino-acid polypeptide reads, in one-letter code: (S)-N-methylcoclaurine 3'-hydroxylase isozyme 1 (481 aa).

A heme-binding site is contributed by Cys423.

This sequence belongs to the cytochrome P450 family. Heme serves as cofactor. Restricted to the parietal region of sieve elements adjacent or proximal to laticifers in roots, stems, leaves, carpels and hypocotyls.

It is found in the endoplasmic reticulum. It catalyses the reaction (S)-N-methylcoclaurine + reduced [NADPH--hemoprotein reductase] + O2 = (S)-3'-hydroxy-N-methylcoclaurine + oxidized [NADPH--hemoprotein reductase] + H2O + H(+). It participates in alkaloid biosynthesis; (S)-reticuline biosynthesis; (S)-reticuline from (S)-norcoclaurine: step 3/4. In terms of biological role, cytochrome P450 monooxygenase involved in the biosynthesis of benzylisoquinoline alkaloids. Catalyzes the 3'-hydroxylation of (S)-N-methylcoclaurine. The polypeptide is (S)-N-methylcoclaurine 3'-hydroxylase isozyme 1 (Papaver somniferum (Opium poppy)).